The following is a 422-amino-acid chain: Retinoic acid receptor RXR-beta-B (422 aa).

The segment at 1–89 (MNSLPPSTSA…SGPMLSQKRM (89 aa)) is modulating. 2 NR C4-type zinc fingers span residues 90 to 110 (CAIC…CEGC) and 126 to 150 (CRDN…YQKC). Residues 90–155 (CAICGDRSSG…RYQKCLAMGM (66 aa)) constitute a DNA-binding region (nuclear receptor). The segment at 156 to 178 (KREAVQEERQKNKERDGDYECSS) is hinge. Over residues 161-173 (QEERQKNKERDGD) the composition is skewed to basic and acidic residues. A disordered region spans residues 161 to 182 (QEERQKNKERDGDYECSSSANE). The region spanning 181–421 (NEEMPVEKIL…TFLMEMLESP (241 aa)) is the NR LBD domain.

Belongs to the nuclear hormone receptor family. NR2 subfamily. In terms of assembly, homodimer. Heterodimer; with a rar molecule. Binds DNA preferentially as a rar/rxr heterodimer. Heterodimerizes with rarga. Shows uniform expression from the blastula to mid-gastrula stages. At 12 hours post-fertilization (hpf), expressed ubiquitously but more weakly. At 24 hpf, restricted to the ventral diencephalon, pharangeal endoderm and trunk and tail mesoderm; mesoderm expression is in medial cells of each somite along the dorsoventral axis, forming stripes. At 48 hpf, expressed in forebrain, eye, midbrain and anterior hindbrain.

It localises to the nucleus. Functionally, receptor for retinoic acid. Retinoic acid receptors bind as heterodimers to their target response elements in response to their ligands, all-trans or 9-cis retinoic acid, and regulate gene expression in various biological processes. The rar/rxr heterodimers bind to the retinoic acid response elements (RARE) composed of tandem 5'-AGGTCA-3' sites known as DR1-DR5. The high affinity ligand for rxrs is 9-cis retinoic acid. This is Retinoic acid receptor RXR-beta-B (rxrbb) from Danio rerio (Zebrafish).